An 83-amino-acid polypeptide reads, in one-letter code: Protein MATERNALLY EXPRESSED GENE 3 (83 aa).

An N-terminal signal peptide occupies residues 1–22; the sequence is MQWLAFVAPRWRCVCDQELSAQ. A disulfide bridge links Cys60 with Cys82.

The protein belongs to the MEG family. As to expression, expressed in endosperm, anther and pollen.

This is Protein MATERNALLY EXPRESSED GENE 3 (MEG3) from Zea mays (Maize).